A 217-amino-acid polypeptide reads, in one-letter code: Probable transaldolase (217 aa).

Catalysis depends on K83, which acts as the Schiff-base intermediate with substrate.

The protein belongs to the transaldolase family. Type 3B subfamily.

Its subcellular location is the cytoplasm. The enzyme catalyses D-sedoheptulose 7-phosphate + D-glyceraldehyde 3-phosphate = D-erythrose 4-phosphate + beta-D-fructose 6-phosphate. It functions in the pathway carbohydrate degradation; pentose phosphate pathway; D-glyceraldehyde 3-phosphate and beta-D-fructose 6-phosphate from D-ribose 5-phosphate and D-xylulose 5-phosphate (non-oxidative stage): step 2/3. In terms of biological role, transaldolase is important for the balance of metabolites in the pentose-phosphate pathway. The protein is Probable transaldolase of Chelativorans sp. (strain BNC1).